A 229-amino-acid chain; its full sequence is MSLLEQLDKNIAASGGLIVSCQPVPGSPLDKPEIVAAMALAAEQAGAVAVRIEGIDNLRMTRSLVSVPIIGIIKRDLDESPVRITPFLDDVDALAQAGAAIIAVDGTARQRPVAVEALLARIHHHHLLAMADCSSVDDGLACQRLGADIIGTTMSGYTTPDTPEEPDLPLVKALHDAGCRVIAEGRYNSPALAAEAIRYGAWAVTVGSAITRLEHICGWYNDALKKAAS.

This sequence belongs to the NanE family.

It carries out the reaction an N-acyl-D-glucosamine 6-phosphate = an N-acyl-D-mannosamine 6-phosphate. Its pathway is amino-sugar metabolism; N-acetylneuraminate degradation; D-fructose 6-phosphate from N-acetylneuraminate: step 3/5. Functionally, converts N-acetylmannosamine-6-phosphate (ManNAc-6-P) to N-acetylglucosamine-6-phosphate (GlcNAc-6-P). The sequence is that of Putative N-acetylmannosamine-6-phosphate 2-epimerase 2 (nanE2) from Salmonella typhimurium (strain LT2 / SGSC1412 / ATCC 700720).